A 433-amino-acid polypeptide reads, in one-letter code: KH domain-containing, RNA-binding, signal transduction-associated protein 1 (433 aa).

Positions 1-79 (MQRRDDSSAR…PLLPGGAVKM (79 aa)) are disordered. Low complexity predominate over residues 41 to 76 (GAQHPQPLLTGGAAAGSSGAQGPAAANPAPLLPGGA). Residues 82-243 (ENKYLPELMA…VKKFLVPDMM (162 aa)) form an involved in homodimerization region. The 27-residue stretch at 171 to 197 (QEETGAKISVLGKGSMRDKAKEEELRK) folds into the KH domain. Disordered stretches follow at residues 259 to 305 (GVPE…ALVR), 317 to 351 (AAVA…PPPP), and 403 to 433 (QDDW…YGRY). Positions 277 to 300 (APPPPPPVPRGRGVGPPPPPPPPR) are enriched in pro residues. Low complexity predominate over residues 329-342 (VRGAPAPRARAAGI). A compositionally biased stretch (basic and acidic residues) spans 424 to 433 (AYREHPYGRY).

It belongs to the KHDRBS family. In terms of assembly, self-associates to form homooligomers when bound to RNA, oligomerization appears to be limited when binding to proteins. In terms of processing, tyrosine phosphorylated by several non-receptor tyrosine kinases including LCK, FYN and JAK3. Acetylated. Positively correlates with ability to bind RNA. Post-translationally, methylated by HRMT1L2. Required for nuclear localization.

Its subcellular location is the nucleus. It is found in the cytoplasm. It localises to the membrane. Functionally, recruited and tyrosine phosphorylated by several receptor systems, for example the T-cell, leptin and insulin receptors. Once phosphorylated, functions as an adapter protein in signal transduction cascades by binding to SH2 and SH3 domain-containing proteins. Role in G2-M progression in the cell cycle. Represses CBP-dependent transcriptional activation apparently by competing with other nuclear factors for binding to CBP. Also acts as a putative regulator of mRNA stability and/or translation rates and mediates mRNA nuclear export. Plays a role in the regulation of alternative splicing and influences mRNA splice site selection and exon inclusion. In Gallus gallus (Chicken), this protein is KH domain-containing, RNA-binding, signal transduction-associated protein 1.